The primary structure comprises 257 residues: UPF0246 protein BPP3440 (257 aa).

The protein belongs to the UPF0246 family.

The chain is UPF0246 protein BPP3440 from Bordetella parapertussis (strain 12822 / ATCC BAA-587 / NCTC 13253).